Reading from the N-terminus, the 295-residue chain is Hepatic leukemia factor (295 aa).

Residues 36–52 (PEDAFSKEKDKGKKLDD) are compositionally biased toward basic and acidic residues. 2 disordered regions span residues 36–76 (PEDA…TLPY) and 92–149 (LSEN…SPIR). The bZIP domain occupies 225–288 (DDKYWARRRK…GKCKNILAKY (64 aa)). Residues 227 to 247 (KYWARRRKNNMAAKRSRDARR) are basic motif. The interval 248–255 (LKENQIAI) is leucine-zipper.

The protein belongs to the bZIP family. PAR subfamily. As to quaternary structure, binds DNA specifically as homodimer or heterodimer with other PAR factors.

It localises to the nucleus. The sequence is that of Hepatic leukemia factor (Hlf) from Mus musculus (Mouse).